Reading from the N-terminus, the 186-residue chain is ADP-ribosylation factor-like protein 8 (186 aa).

An intramembrane region (note=Mediates targeting to membranes) is located at residues 1–19; sequence MLALINRILEWFKSIFWKE. GTP is bound by residues 29 to 35, 71 to 75, and 130 to 133; these read QFSGKTT, DIGGQ, and NKRD.

It belongs to the small GTPase superfamily. Arf family. In terms of assembly, interacts with tubulin. Interacts (in GTP-bound form) with Rilpl. Interacts with unc-104. In terms of tissue distribution, expressed throughout development, from embryo to adult stage, in different tissues such as larval motor neurons, salivary glands, testis and ovaries (at protein level).

The protein resides in the lysosome membrane. It is found in the synapse. The protein localises to the cell projection. Its subcellular location is the axon. It localises to the perikaryon. Required for normal functioning of the late endocytic pathway including lysosome motility and late endosome-lysosome fusion. Not required for the delivery of lysosomal membrane protein-containing vesicles to late endosomes. In larval motor neurons, mediates the anterograde axonal long-range transport of presynaptic lysosome-related vesicles required for presynaptic biogenesis and synaptic function. Acts downstream of Rab2 during presynaptic precursor vesicle biogenesis. Essential role in chromosome segregation. The protein is ADP-ribosylation factor-like protein 8 of Drosophila melanogaster (Fruit fly).